Consider the following 118-residue polypeptide: UPF0102 protein Arth_2474 (118 aa).

Belongs to the UPF0102 family.

The polypeptide is UPF0102 protein Arth_2474 (Arthrobacter sp. (strain FB24)).